We begin with the raw amino-acid sequence, 785 residues long: Phenylalanine--tRNA ligase beta subunit (785 aa).

In terms of domain architecture, tRNA-binding spans 39 to 150 (RTWAAGVVVG…ASLPLGLDVG (112 aa)). A B5 domain is found at 400 to 476 (RENRVVSLRP…RVVGYDRFAP (77 aa)). Mg(2+) contacts are provided by D454, D460, E463, and E464. The FDX-ACB domain occupies 692 to 784 (SPFPPAARDL…LAERYSVDLR (93 aa)).

The protein belongs to the phenylalanyl-tRNA synthetase beta subunit family. Type 1 subfamily. In terms of assembly, tetramer of two alpha and two beta subunits. Mg(2+) is required as a cofactor.

It is found in the cytoplasm. The catalysed reaction is tRNA(Phe) + L-phenylalanine + ATP = L-phenylalanyl-tRNA(Phe) + AMP + diphosphate + H(+). In Gloeobacter violaceus (strain ATCC 29082 / PCC 7421), this protein is Phenylalanine--tRNA ligase beta subunit.